Reading from the N-terminus, the 207-residue chain is Octanoyltransferase (207 aa).

In terms of domain architecture, BPL/LPL catalytic spans 29 to 204 (AETRDELWVV…HLERHLSTSK (176 aa)). Substrate contacts are provided by residues 68-75 (RGGQITYH), 135-137 (SLG), and 148-150 (GLS). Catalysis depends on cysteine 166, which acts as the Acyl-thioester intermediate.

Belongs to the LipB family.

The protein resides in the cytoplasm. The catalysed reaction is octanoyl-[ACP] + L-lysyl-[protein] = N(6)-octanoyl-L-lysyl-[protein] + holo-[ACP] + H(+). Its pathway is protein modification; protein lipoylation via endogenous pathway; protein N(6)-(lipoyl)lysine from octanoyl-[acyl-carrier-protein]: step 1/2. In terms of biological role, catalyzes the transfer of endogenously produced octanoic acid from octanoyl-acyl-carrier-protein onto the lipoyl domains of lipoate-dependent enzymes. Lipoyl-ACP can also act as a substrate although octanoyl-ACP is likely to be the physiological substrate. In Chromobacterium violaceum (strain ATCC 12472 / DSM 30191 / JCM 1249 / CCUG 213 / NBRC 12614 / NCIMB 9131 / NCTC 9757 / MK), this protein is Octanoyltransferase.